The sequence spans 129 residues: Large ribosomal subunit protein bL17 (129 aa).

The protein belongs to the bacterial ribosomal protein bL17 family. Part of the 50S ribosomal subunit. Contacts protein L32.

In Polynucleobacter asymbioticus (strain DSM 18221 / CIP 109841 / QLW-P1DMWA-1) (Polynucleobacter necessarius subsp. asymbioticus), this protein is Large ribosomal subunit protein bL17.